We begin with the raw amino-acid sequence, 345 residues long: Anthranilate phosphoribosyltransferase (345 aa).

Residues G81, G84–D85, S89, N91–T94, K109–S117, and A121 each bind 5-phospho-alpha-D-ribose 1-diphosphate. Residue G81 participates in anthranilate binding. S93 lines the Mg(2+) pocket. N112 lines the anthranilate pocket. R167 provides a ligand contact to anthranilate. Residues D226 and E227 each coordinate Mg(2+).

This sequence belongs to the anthranilate phosphoribosyltransferase family. In terms of assembly, homodimer. It depends on Mg(2+) as a cofactor.

It carries out the reaction N-(5-phospho-beta-D-ribosyl)anthranilate + diphosphate = 5-phospho-alpha-D-ribose 1-diphosphate + anthranilate. It functions in the pathway amino-acid biosynthesis; L-tryptophan biosynthesis; L-tryptophan from chorismate: step 2/5. Functionally, catalyzes the transfer of the phosphoribosyl group of 5-phosphorylribose-1-pyrophosphate (PRPP) to anthranilate to yield N-(5'-phosphoribosyl)-anthranilate (PRA). The protein is Anthranilate phosphoribosyltransferase of Methylobacterium radiotolerans (strain ATCC 27329 / DSM 1819 / JCM 2831 / NBRC 15690 / NCIMB 10815 / 0-1).